A 555-amino-acid chain; its full sequence is Urocanate hydratase (555 aa).

NAD(+)-binding positions include 52–53, Q130, 176–178, E196, R201, 242–243, 263–267, 273–274, and Y322; these read GG, GMG, NA, QTSAH, and YL. Residue C410 is part of the active site. G492 provides a ligand contact to NAD(+).

Belongs to the urocanase family. NAD(+) serves as cofactor.

Its subcellular location is the cytoplasm. The enzyme catalyses 4-imidazolone-5-propanoate = trans-urocanate + H2O. It functions in the pathway amino-acid degradation; L-histidine degradation into L-glutamate; N-formimidoyl-L-glutamate from L-histidine: step 2/3. Its function is as follows. Catalyzes the conversion of urocanate to 4-imidazolone-5-propionate. The chain is Urocanate hydratase from Shewanella baltica (strain OS185).